The following is a 261-amino-acid chain: tRNA 5-carboxymethoxyuridine methyltransferase (261 aa).

Residues R26, 52-53, D73, 102-103, and H119 contribute to the S-adenosyl-L-methionine site; these read GG and AQ.

This sequence belongs to the class I-like SAM-binding methyltransferase superfamily. CmoM family. Homodimer.

The enzyme catalyses 5-carboxymethoxyuridine(34) in tRNA + S-adenosyl-L-methionine = 5-methoxycarbonylmethoxyuridine(34) in tRNA + S-adenosyl-L-homocysteine. Functionally, catalyzes the methylation of 5-carboxymethoxyuridine (cmo5U) to form 5-methoxycarbonylmethoxyuridine (mcmo5U) at position 34 in tRNAs. This chain is tRNA 5-carboxymethoxyuridine methyltransferase, found in Escherichia coli O157:H7.